A 901-amino-acid chain; its full sequence is Valine--tRNA ligase (901 aa).

A 'KMSKS' region motif is present at residues 536–540 (KLSKS). ATP is bound at residue K539. A coiled-coil region spans residues 831-901 (LEGLISFEKE…KLQGNLEVLS (71 aa)).

Belongs to the class-I aminoacyl-tRNA synthetase family. ValS type 1 subfamily. In terms of assembly, monomer.

Its subcellular location is the cytoplasm. It catalyses the reaction tRNA(Val) + L-valine + ATP = L-valyl-tRNA(Val) + AMP + diphosphate. Its function is as follows. Catalyzes the attachment of valine to tRNA(Val). As ValRS can inadvertently accommodate and process structurally similar amino acids such as threonine, to avoid such errors, it has a 'posttransfer' editing activity that hydrolyzes mischarged Thr-tRNA(Val) in a tRNA-dependent manner. In Chlorobaculum tepidum (strain ATCC 49652 / DSM 12025 / NBRC 103806 / TLS) (Chlorobium tepidum), this protein is Valine--tRNA ligase.